The primary structure comprises 292 residues: Protein/nucleic acid deglycase HchA (292 aa).

The span at 1–12 shows a compositional bias: polar residues; sequence MSQDVNELSKQP. The disordered stretch occupies residues 1–23; the sequence is MSQDVNELSKQPTPDKAEDNAFF. Cys-190 acts as the Nucleophile in catalysis.

The protein belongs to the peptidase C56 family. HchA subfamily.

The protein localises to the cytoplasm. The catalysed reaction is N(omega)-(1-hydroxy-2-oxopropyl)-L-arginyl-[protein] + H2O = lactate + L-arginyl-[protein] + H(+). The enzyme catalyses N(6)-(1-hydroxy-2-oxopropyl)-L-lysyl-[protein] + H2O = lactate + L-lysyl-[protein] + H(+). It carries out the reaction S-(1-hydroxy-2-oxopropyl)-L-cysteinyl-[protein] + H2O = lactate + L-cysteinyl-[protein] + H(+). It catalyses the reaction N(omega)-(1-hydroxy-2-oxoethyl)-L-arginyl-[protein] + H2O = L-arginyl-[protein] + glycolate + H(+). The catalysed reaction is N(6)-(1-hydroxy-2-oxoethyl)-L-lysyl-[protein] + H2O = glycolate + L-lysyl-[protein] + H(+). The enzyme catalyses S-(1-hydroxy-2-oxoethyl)-L-cysteinyl-[protein] + H2O = glycolate + L-cysteinyl-[protein] + H(+). It carries out the reaction N(2)-(1-hydroxy-2-oxopropyl)-dGTP + H2O = lactate + dGTP + H(+). It catalyses the reaction N(2)-(1-hydroxy-2-oxopropyl)-GTP + H2O = lactate + GTP + H(+). The catalysed reaction is N(2)-(1-hydroxy-2-oxopropyl)-GDP + H2O = lactate + GDP + H(+). The enzyme catalyses N(2)-(1-hydroxy-2-oxopropyl)-GMP + H2O = lactate + GMP + H(+). It carries out the reaction N(2)-(1-hydroxy-2-oxoethyl)-dGTP + H2O = dGTP + glycolate + H(+). It catalyses the reaction N(2)-(1-hydroxy-2-oxoethyl)-GTP + H2O = glycolate + GTP + H(+). The catalysed reaction is N(2)-(1-hydroxy-2-oxoethyl)-GDP + H2O = glycolate + GDP + H(+). The enzyme catalyses N(2)-(1-hydroxy-2-oxoethyl)-GMP + H2O = glycolate + GMP + H(+). It carries out the reaction an N(2)-(1-hydroxy-2-oxopropyl)-guanosine in RNA + H2O = a guanosine in RNA + lactate + H(+). It catalyses the reaction an N(2)-(1-hydroxy-2-oxopropyl)-2'-deoxyguanosine in DNA + H2O = a 2'-deoxyguanosine in DNA + lactate + H(+). The catalysed reaction is an N(2)-(1-hydroxy-2-oxoethyl)-guanosine in RNA + H2O = a guanosine in RNA + glycolate + H(+). The enzyme catalyses an N(2)-(1-hydroxy-2-oxoethyl)-2'-deoxyguanosine in DNA + H2O = a 2'-deoxyguanosine in DNA + glycolate + H(+). Protein and nucleotide deglycase that catalyzes the deglycation of the Maillard adducts formed between amino groups of proteins or nucleotides and reactive carbonyl groups of glyoxals. Thus, functions as a protein deglycase that repairs methylglyoxal- and glyoxal-glycated proteins, and releases repaired proteins and lactate or glycolate, respectively. Deglycates cysteine, arginine and lysine residues in proteins, and thus reactivates these proteins by reversing glycation by glyoxals. Acts on early glycation intermediates (hemithioacetals and aminocarbinols), preventing the formation of Schiff bases and advanced glycation endproducts (AGE). Also functions as a nucleotide deglycase able to repair glycated guanine in the free nucleotide pool (GTP, GDP, GMP, dGTP) and in DNA and RNA. Is thus involved in a major nucleotide repair system named guanine glycation repair (GG repair), dedicated to reversing methylglyoxal and glyoxal damage via nucleotide sanitization and direct nucleic acid repair. Plays an important role in protecting cells from carbonyl stress. This chain is Protein/nucleic acid deglycase HchA, found in Staphylococcus aureus (strain MSSA476).